The chain runs to 178 residues: Large ribosomal subunit protein uL6 (178 aa).

Belongs to the universal ribosomal protein uL6 family. In terms of assembly, part of the 50S ribosomal subunit.

Functionally, this protein binds to the 23S rRNA, and is important in its secondary structure. It is located near the subunit interface in the base of the L7/L12 stalk, and near the tRNA binding site of the peptidyltransferase center. The polypeptide is Large ribosomal subunit protein uL6 (Gluconobacter oxydans (strain 621H) (Gluconobacter suboxydans)).